The sequence spans 486 residues: Pentatricopeptide repeat-containing protein At2g01860 (486 aa).

Residues 111 to 137 are disordered; sequence QKPDKPSRVRPLPLPQPHKLRPLGLPT. PPR repeat units lie at residues 290–321, 327–361, 362–396, 397–431, and 432–466; these read DSSV…LKKR, SQQD…NREP, SVVM…NCLL, DLPA…GFSP, and TYDI…GLRL.

It belongs to the PPR family. P subfamily.

The chain is Pentatricopeptide repeat-containing protein At2g01860 (EMB975) from Arabidopsis thaliana (Mouse-ear cress).